The chain runs to 437 residues: AA9 family lytic polysaccharide monooxygenase H (437 aa).

An N-terminal signal peptide occupies residues Met1–Ala21. Position 22 (His22) interacts with Cu(2+). A disulfide bridge connects residues Cys64 and Cys193. Asn67 and Asn79 each carry an N-linked (GlcNAc...) asparagine glycan. His104 contacts Cu(2+). Residues Asn120 and Asn138 are each glycosylated (N-linked (GlcNAc...) asparagine). O2 is bound by residues His178 and Gln188. Tyr190 is a Cu(2+) binding site. Residues Asn252 and Asn307 are each glycosylated (N-linked (GlcNAc...) asparagine). Positions Asp392–Gly437 constitute a Chitin-binding type-1 domain. Intrachain disulfides connect Cys395–Cys412, Cys403–Cys418, Cys411–Cys425, and Cys429–Cys436.

Belongs to the polysaccharide monooxygenase AA9 family. Cu(2+) is required as a cofactor.

The protein resides in the secreted. The catalysed reaction is [(1-&gt;4)-beta-D-glucosyl]n+m + reduced acceptor + O2 = 4-dehydro-beta-D-glucosyl-[(1-&gt;4)-beta-D-glucosyl]n-1 + [(1-&gt;4)-beta-D-glucosyl]m + acceptor + H2O.. Lytic polysaccharide monooxygenase (LPMO) that depolymerizes crystalline and amorphous polysaccharides via the oxidation of scissile alpha- or beta-(1-4)-glycosidic bonds, yielding C1 and C4 oxidation products. Catalysis by LPMOs requires the reduction of the active-site copper from Cu(II) to Cu(I) by a reducing agent and H(2)O(2) or O(2) as a cosubstrate. The sequence is that of AA9 family lytic polysaccharide monooxygenase H from Botryotinia fuckeliana (strain B05.10) (Noble rot fungus).